Consider the following 553-residue polypeptide: Chaperonin GroEL 1 (553 aa).

ATP contacts are provided by residues 29–32 (TIGP), 86–90 (DGTTT), Gly413, 476–478 (NAL), and Asp492. The interval 520–543 (DKPEPPAPAGGGGDPMGGMGGMDP) is disordered. Over residues 528–543 (AGGGGDPMGGMGGMDP) the composition is skewed to gly residues.

It belongs to the chaperonin (HSP60) family. As to quaternary structure, forms a cylinder of 14 subunits composed of two heptameric rings stacked back-to-back. Interacts with the co-chaperonin GroES.

It is found in the cytoplasm. It catalyses the reaction ATP + H2O + a folded polypeptide = ADP + phosphate + an unfolded polypeptide.. Together with its co-chaperonin GroES, plays an essential role in assisting protein folding. The GroEL-GroES system forms a nano-cage that allows encapsulation of the non-native substrate proteins and provides a physical environment optimized to promote and accelerate protein folding. The protein is Chaperonin GroEL 1 of Synechococcus sp. (strain CC9311).